Reading from the N-terminus, the 47-residue chain is uncharacterized protein (47 aa).

The N-terminal stretch at 1–18 (MKKWLLIIAGALIISACA) is a signal peptide. Residues 28–47 (EGSHSGVKFDKDSRQWGLNQ) are disordered.

This is an uncharacterized protein from Haemophilus influenzae (strain ATCC 51907 / DSM 11121 / KW20 / Rd).